The following is a 103-amino-acid chain: Small integral membrane protein 32 (103 aa).

A helical membrane pass occupies residues 55–75; it reads YLLLFFLLLLSVALVVLFIGC.

The protein localises to the membrane. In Homo sapiens (Human), this protein is Small integral membrane protein 32.